The sequence spans 479 residues: Tegument protein VP16 homolog (479 aa).

It belongs to the herpesviridae tegument protein VP16 protein family. Associates with the VP16-induced complex; binding to host HCFC1 activates VP16 for association with the octamer motif-binding host protein POU2F1, to form a multiprotein-DNA complex responsible for activating transcription of the viral immediate early genes.

It is found in the virion tegument. It localises to the host nucleus. Its function is as follows. Transcriptional activator of immediate-early (IE) gene products (alpha genes). Acts as a key activator of lytic infection by initiating the lytic program through the assembly of the transcriptional regulatory VP16-induced complex composed of VP16 and two cellular factors, HCFC1 and POU2F1. VP16-induced complex represents a regulatory switch: when it is on, it promotes IE-gene expression and thus lytic infection, and when it is off, it limits IE-gene transcription favoring latent infection. May play a role in the aggregation of tegument proteins around nucleocapsids during virus morphogenesis. The protein is Tegument protein VP16 homolog of Equus caballus (Horse).